We begin with the raw amino-acid sequence, 309 residues long: Extracellular agarase (309 aa).

Positions methionine 1–alanine 30 form a signal peptide, tat-type signal. The GH16 domain maps to leucine 33–valine 309. Residue glutamate 155 is the Nucleophile of the active site. Glutamate 160 (proton donor) is an active-site residue.

It belongs to the glycosyl hydrolase 16 family. Post-translationally, predicted to be exported by the Tat system. The position of the signal peptide cleavage has been experimentally proven.

It localises to the secreted. It carries out the reaction Hydrolysis of (1-&gt;4)-beta-D-galactosidic linkages in agarose, giving the tetramer as the predominant product.. The sequence is that of Extracellular agarase (dagA) from Streptomyces coelicolor (strain ATCC BAA-471 / A3(2) / M145).